Reading from the N-terminus, the 381-residue chain is DnaJ-related protein spj1 (381 aa).

One can recognise a J domain in the interval 5 to 74 (NFSQKQILGV…RKIYDAYGEE (70 aa)). The interval 72-93 (GEEGLNGQPGGPGGGPGEGFPG) is disordered. Positions 78-93 (GQPGGPGGGPGEGFPG) are enriched in gly residues. A CR-type zinc finger spans residues 138-225 (GGSFTLEIPV…CKGERVAEVV (88 aa)). CXXCXGXG motif repeat units lie at residues 151–158 (CSVCSGQG), 172–179 (CPVCGGSG), 199–206 (CNACNGNG), and 213–220 (CPRCKGER). The Prevents secretion from ER motif lies at 378 to 381 (FDEL).

It is found in the endoplasmic reticulum. The chain is DnaJ-related protein spj1 (spj1) from Schizosaccharomyces pombe (strain 972 / ATCC 24843) (Fission yeast).